An 815-amino-acid chain; its full sequence is Leucine--tRNA ligase (815 aa).

The 'HIGH' region motif lies at 42-52 (PYPSGRLHMGH). The 'KMSKS' region signature appears at 571–575 (KMSKS). Lysine 574 lines the ATP pocket.

The protein belongs to the class-I aminoacyl-tRNA synthetase family.

It is found in the cytoplasm. It carries out the reaction tRNA(Leu) + L-leucine + ATP = L-leucyl-tRNA(Leu) + AMP + diphosphate. The chain is Leucine--tRNA ligase from Vesicomyosocius okutanii subsp. Calyptogena okutanii (strain HA).